The chain runs to 441 residues: G-protein coupled receptor family C group 5 member C (441 aa).

A signal peptide spans 1 to 23 (MAIHKALVMCLGLPLFLFPGAWA). The Extracellular portion of the chain corresponds to 24-50 (QGHVPPGCSQGLNPLYYNLCDRSGAWG). A helical transmembrane segment spans residues 51–71 (IVLEAVAGAGIVTTFVLTIIL). Residues 72–85 (VASLPFVQDTKKRS) lie on the Cytoplasmic side of the membrane. A helical transmembrane segment spans residues 86–106 (LLGTQVFFLLGTLGLFCLVFA). Topologically, residues 107 to 120 (CVVKPDFSTCASRR) are extracellular. A helical transmembrane segment spans residues 121–141 (FLFGVLFAICFSCLAAHVFAL). Over 142 to 155 (NFLARKNHGPRGWV) the chain is Cytoplasmic. A helical transmembrane segment spans residues 156 to 176 (IFTVALLLTLVEVIINTEWLI). Topologically, residues 177–208 (ITLVRGSGEGGPQGNSSAGWAVASPCAIANMD) are extracellular. The N-linked (GlcNAc...) asparagine glycan is linked to Asn191. A helical transmembrane segment spans residues 209-229 (FVMALIYVMLLLLGAFLGAWP). The Cytoplasmic segment spans residues 230 to 241 (ALCGRYKRWRKH). A helical membrane pass occupies residues 242–262 (GVFVLLTTATSVAIWVVWIVM). Residues 263–279 (YTYGNKQHNSPTWDDPT) lie on the Extracellular side of the membrane. The helical transmembrane segment at 280 to 300 (LAIALAANAWAFVLFYVIPEV) threads the bilayer. Over 301-441 (SQVTKSSPEQ…QVFRNPYVWD (141 aa)) the chain is Cytoplasmic. Phosphoserine occurs at positions 344, 383, 403, and 406. Residues 412 to 441 (DMYSAQSHQAATPPKDGKNSQVFRNPYVWD) are disordered. Tyr414 carries the post-translational modification Phosphotyrosine. Thr423 carries the post-translational modification Phosphothreonine.

It belongs to the G-protein coupled receptor 3 family. As to expression, expression is highest in the periphery, particularly in the stomach, but also in the kidney, liver, pancreas, and prostate. In brain, levels of expression are generally lower than in the periphery, with the exception of cerebellum, spinal cord, and dorsal root ganglia (DRG).

The protein resides in the cell membrane. Its subcellular location is the cytoplasmic vesicle membrane. This retinoic acid-inducible G-protein coupled receptor provide evidence for a possible interaction between retinoid and G-protein signaling pathways. The protein is G-protein coupled receptor family C group 5 member C (GPRC5C) of Homo sapiens (Human).